We begin with the raw amino-acid sequence, 245 residues long: MDGTRTVLDIKEYSDSEVQKNRVLTLEEWQGKWVTGKTIFHQEQGHQLLKKHLDAFLKGESGLKVFFPLCGKAVEMKWFADRGHSVVGVEISELGIREFFTEQNLSYSEEPIIEIPGAKVFKSSSGNISLYCCNIFDLPRTNIGKFDRIWDRGALVAVNPGDRKRYVDIMLSLTRKGFHYLLAVLSYDPTKHAGPPFFVSDAEVKRLFDSVCNIRCLEKVDALEERHKSWGIDYLVETLYLFTEK.

Position 14 is a phosphoserine (S14). 29–40 (WQGKWVTGKTIF) serves as a coordination point for S-adenosyl-L-methionine. Position 40 (F40) interacts with substrate. An N6-acetyllysine modification is found at K58. 3 residues coordinate S-adenosyl-L-methionine: L69, E90, and R152.

The protein belongs to the class I-like SAM-binding methyltransferase superfamily. TPMT family. As to quaternary structure, monomer.

The protein localises to the cytoplasm. The catalysed reaction is S-adenosyl-L-methionine + a thiopurine = S-adenosyl-L-homocysteine + a thiopurine S-methylether.. The protein is Thiopurine S-methyltransferase (TPMT) of Equus caballus (Horse).